A 677-amino-acid polypeptide reads, in one-letter code: UvrABC system protein B (677 aa).

Residues 24–412 (EGVLEGVPAQ…EGIVVEQVIR (389 aa)) form the Helicase ATP-binding domain. ATP is bound at residue 37–44 (GVTGSGKT). A Beta-hairpin motif is present at residues 90–113 (YYDYYQPEAYLPSSDTYIEKDLAI). In terms of domain architecture, Helicase C-terminal spans 429–591 (QIDDLMEEIQ…ITPQQIKKAR (163 aa)). In terms of domain architecture, UVR spans 635-670 (EKSMERTRKLMQEAAKKLEFIEAAQYRDELLKMEDL).

This sequence belongs to the UvrB family. As to quaternary structure, forms a heterotetramer with UvrA during the search for lesions. Interacts with UvrC in an incision complex.

The protein localises to the cytoplasm. Functionally, the UvrABC repair system catalyzes the recognition and processing of DNA lesions. A damage recognition complex composed of 2 UvrA and 2 UvrB subunits scans DNA for abnormalities. Upon binding of the UvrA(2)B(2) complex to a putative damaged site, the DNA wraps around one UvrB monomer. DNA wrap is dependent on ATP binding by UvrB and probably causes local melting of the DNA helix, facilitating insertion of UvrB beta-hairpin between the DNA strands. Then UvrB probes one DNA strand for the presence of a lesion. If a lesion is found the UvrA subunits dissociate and the UvrB-DNA preincision complex is formed. This complex is subsequently bound by UvrC and the second UvrB is released. If no lesion is found, the DNA wraps around the other UvrB subunit that will check the other stand for damage. This is UvrABC system protein B from Bacteroides fragilis (strain ATCC 25285 / DSM 2151 / CCUG 4856 / JCM 11019 / LMG 10263 / NCTC 9343 / Onslow / VPI 2553 / EN-2).